Reading from the N-terminus, the 192-residue chain is Probable nicotinate-nucleotide adenylyltransferase (192 aa).

The protein belongs to the NadD family.

The catalysed reaction is nicotinate beta-D-ribonucleotide + ATP + H(+) = deamido-NAD(+) + diphosphate. Its pathway is cofactor biosynthesis; NAD(+) biosynthesis; deamido-NAD(+) from nicotinate D-ribonucleotide: step 1/1. Its function is as follows. Catalyzes the reversible adenylation of nicotinate mononucleotide (NaMN) to nicotinic acid adenine dinucleotide (NaAD). In Rhizobium etli (strain ATCC 51251 / DSM 11541 / JCM 21823 / NBRC 15573 / CFN 42), this protein is Probable nicotinate-nucleotide adenylyltransferase.